Consider the following 655-residue polypeptide: Epithelial sodium channel subunit alpha (655 aa).

The Cytoplasmic portion of the chain corresponds to 1 to 55 (MTDKEEEAEGGKKKEPMIGFYDSYQELFEFFCNNTTIHGTIRMVCSKHNNMKTVS). The chain crosses the membrane as a helical span at residues 56–76 (WTILFITTFGVMYWQFGLLLG). The Extracellular portion of the chain corresponds to 77 to 531 (QYYSYPVSIT…SQWSLWFGSS (455 aa)). Cystine bridges form between Cys102/Cys275, Cys199/Cys206, Cys252/Cys259, Cys364/Cys448, Cys385/Cys425, Cys385/Cys444, Cys389/Cys440, Cys398/Cys425, Cys398/Cys448, and Cys400/Cys414. The helical transmembrane segment at 532–552 (VLSVVEMGELVFDLIAVGVIV) threads the bilayer. Residues 553–655 (LRRRRREKCQ…QEASEGPTVL (103 aa)) lie on the Cytoplasmic side of the membrane. Positions 561 to 587 (CQASSDGEGTSDSTAGTHRGQENASRS) are disordered. Polar residues predominate over residues 562-586 (QASSDGEGTSDSTAGTHRGQENASR).

It belongs to the amiloride-sensitive sodium channel (TC 1.A.6) family. SCNN1A subfamily. In terms of assembly, heterotrimer; containing an alpha/SCNN1A, a beta/SCNN1B and a gamma/SCNN1G subunit. In terms of tissue distribution, strongly expressed in gill, kidney and rectum (at protein level). More weakly expressed in muscle, brain, heart, liver and intestine.

The protein resides in the apical cell membrane. The protein localises to the cell projection. It localises to the cilium. It is found in the cytoplasmic granule. Its subcellular location is the cytoplasm. The protein resides in the cytoplasmic vesicle. The protein localises to the secretory vesicle. It localises to the acrosome. It is found in the flagellum. It catalyses the reaction Na(+)(in) = Na(+)(out). Its activity is regulated as follows. Originally identified and characterized by its inhibition by the diuretic drug amiloride. Functionally, this is one of the three pore-forming subunits of the heterotrimeric epithelial sodium channel (ENaC), a critical regulator of sodium balance and fluid homeostasis. ENaC operates in epithelial tissues, where it mediates the electrodiffusion of sodium ions from extracellular fluid through the apical membrane of cells, with water following osmotically. This chain is Epithelial sodium channel subunit alpha (scnn1a), found in Neoceratodus forsteri (Australian lungfish).